We begin with the raw amino-acid sequence, 325 residues long: Protein VP6-B (325 aa).

Disordered stretches follow at residues 23–123 (INLI…TIGA) and 176–229 (VAEQ…EEQA). 2 stretches are compositionally biased toward basic and acidic residues: residues 32–52 (ESGKEDKAEPKEESKAEESKD) and 61–79 (SQKKEGSKEAKDADVDRRI). Positions 106–123 (KVGGGGGNADAGVGTIGA) are enriched in gly residues. Composition is skewed to basic and acidic residues over residues 176-201 (VAEQTERLRDLRRKEKSGAHAKAAER) and 210-226 (PHGDVQKEGTEEEKTSE).

Belongs to the orbivirus VP6 family.

The protein resides in the virion. Surrounds and interacts with the genomic dsRNA. Possesses ss- and dsRNA-binding capacity. Its hydrophilic nature and capability to bind ss- and dsRNA suggest that it interacts with BTV genomic RNA. This chain is Protein VP6-B (Segment-9), found in Bluetongue virus 10 (isolate USA) (BTV 10).